Consider the following 276-residue polypeptide: Undecaprenyl-diphosphatase 2 (276 aa).

The next 8 helical transmembrane spans lie at 1–21 (MSLW…LFPV), 44–64 (QLLP…LWYF), 87–107 (GHLM…GLLL), 114–134 (VFHD…LLWL), 150–170 (MTFK…IPGF), 190–210 (AAEF…VLEL), 222–242 (DALL…RFLM), and 251–271 (LASF…WFML).

It belongs to the UppP family.

It localises to the cell inner membrane. The enzyme catalyses di-trans,octa-cis-undecaprenyl diphosphate + H2O = di-trans,octa-cis-undecaprenyl phosphate + phosphate + H(+). Catalyzes the dephosphorylation of undecaprenyl diphosphate (UPP). Confers resistance to bacitracin. The chain is Undecaprenyl-diphosphatase 2 from Burkholderia lata (strain ATCC 17760 / DSM 23089 / LMG 22485 / NCIMB 9086 / R18194 / 383).